We begin with the raw amino-acid sequence, 221 residues long: Putative NAD(P)H nitroreductase YfkO (221 aa).

FMN is bound by residues arginine 15–alanine 17 and glutamine 73–glutamine 75. Alanine 157 to glycine 162 contacts NAD(+). FMN is bound by residues glutamate 169–glycine 170 and arginine 211.

Belongs to the nitroreductase family. Monomer. FMN is required as a cofactor.

The sequence is that of Putative NAD(P)H nitroreductase YfkO (yfkO) from Bacillus subtilis (strain 168).